A 196-amino-acid polypeptide reads, in one-letter code: GTP cyclohydrolase-2 (196 aa).

49–53 (RVHSE) contacts GTP. 3 residues coordinate Zn(2+): Cys54, Cys65, and Cys67. GTP is bound by residues Gln70, 92 to 94 (EGR), and Thr114. Residue Asp126 is the Proton acceptor of the active site. Arg128 (nucleophile) is an active-site residue. The GTP site is built by Thr149 and Lys154.

Belongs to the GTP cyclohydrolase II family. In terms of assembly, homodimer. Requires Zn(2+) as cofactor.

It catalyses the reaction GTP + 4 H2O = 2,5-diamino-6-hydroxy-4-(5-phosphoribosylamino)-pyrimidine + formate + 2 phosphate + 3 H(+). Its pathway is cofactor biosynthesis; riboflavin biosynthesis; 5-amino-6-(D-ribitylamino)uracil from GTP: step 1/4. Functionally, catalyzes the conversion of GTP to 2,5-diamino-6-ribosylamino-4(3H)-pyrimidinone 5'-phosphate (DARP), formate and pyrophosphate. This Yersinia pestis protein is GTP cyclohydrolase-2.